A 199-amino-acid polypeptide reads, in one-letter code: ATP-dependent Clp protease proteolytic subunit (199 aa).

Residues 1-23 are disordered; it reads MTTSAARKGLRTRGSACPRATRS. Ser-100 serves as the catalytic Nucleophile. Residue His-125 is part of the active site.

This sequence belongs to the peptidase S14 family. In terms of assembly, fourteen ClpP subunits assemble into 2 heptameric rings which stack back to back to give a disk-like structure with a central cavity, resembling the structure of eukaryotic proteasomes.

It is found in the cytoplasm. It catalyses the reaction Hydrolysis of proteins to small peptides in the presence of ATP and magnesium. alpha-casein is the usual test substrate. In the absence of ATP, only oligopeptides shorter than five residues are hydrolyzed (such as succinyl-Leu-Tyr-|-NHMec, and Leu-Tyr-Leu-|-Tyr-Trp, in which cleavage of the -Tyr-|-Leu- and -Tyr-|-Trp bonds also occurs).. Cleaves peptides in various proteins in a process that requires ATP hydrolysis. Has a chymotrypsin-like activity. Plays a major role in the degradation of misfolded proteins. In Paracoccus denitrificans, this protein is ATP-dependent Clp protease proteolytic subunit.